A 434-amino-acid polypeptide reads, in one-letter code: Serine hydroxymethyltransferase (434 aa).

(6S)-5,6,7,8-tetrahydrofolate-binding positions include L128 and G132–L134. Residue K237 is modified to N6-(pyridoxal phosphate)lysine.

This sequence belongs to the SHMT family. As to quaternary structure, homodimer. It depends on pyridoxal 5'-phosphate as a cofactor.

It localises to the cytoplasm. The catalysed reaction is (6R)-5,10-methylene-5,6,7,8-tetrahydrofolate + glycine + H2O = (6S)-5,6,7,8-tetrahydrofolate + L-serine. The protein operates within one-carbon metabolism; tetrahydrofolate interconversion. It functions in the pathway amino-acid biosynthesis; glycine biosynthesis; glycine from L-serine: step 1/1. Catalyzes the reversible interconversion of serine and glycine with tetrahydrofolate (THF) serving as the one-carbon carrier. This reaction serves as the major source of one-carbon groups required for the biosynthesis of purines, thymidylate, methionine, and other important biomolecules. Also exhibits THF-independent aldolase activity toward beta-hydroxyamino acids, producing glycine and aldehydes, via a retro-aldol mechanism. The polypeptide is Serine hydroxymethyltransferase (Corynebacterium efficiens (strain DSM 44549 / YS-314 / AJ 12310 / JCM 11189 / NBRC 100395)).